A 186-amino-acid chain; its full sequence is Tumor necrosis factor, alpha-induced protein 8-like protein 2 B (186 aa).

It belongs to the TNFAIP8 family. TNFAIP8L2 subfamily.

Acts as a negative regulator of innate and adaptive immunity by maintaining immune homeostasis. Negative regulator of Toll-like receptor and T-cell receptor function. Prevents hyperresponsiveness of the immune system and maintains immune homeostasis. Inhibits jun/ap1 and NF-kappa-B activation. Promotes Fas-induced apoptosis. This is Tumor necrosis factor, alpha-induced protein 8-like protein 2 B (tnfaip8l2b) from Danio rerio (Zebrafish).